Reading from the N-terminus, the 342-residue chain is Serpentine receptor class beta-16 (342 aa).

At 1 to 22 the chain is on the extracellular side; sequence MDRELIEICKENSATAFSVGYQ. A helical membrane pass occupies residues 23–43; that stretch reads IVYLIYVVLSVTSIFTCSYFI. Over 44-61 the chain is Cytoplasmic; sequence KTFIWNSTFHPNFKLLLT. The chain crosses the membrane as a helical span at residues 62–82; sequence MYFFAAIFHSFLFTASYLMMI. Over 83-102 the chain is Extracellular; the sequence is ERFLDYQTDCDIHVSMVPYA. The chain crosses the membrane as a helical span at residues 103–123; it reads IVHSSIACCLFCGMLTQVFMV. Topologically, residues 124-141 are cytoplasmic; the sequence is IERLLATIKIESYEHNTS. Residues 142–162 form a helical membrane-spanning segment; the sequence is FWHILAYLFFCIVLPLSLLVW. Over 163-187 the chain is Extracellular; the sequence is AYQDADYNSPVITAISPPKGVEIRL. A helical membrane pass occupies residues 188–208; it reads NILYIFCFFLAILALILLQVV. Over 209-237 the chain is Cytoplasmic; the sequence is RFVNKRRESRIEISLSGRFQIVENIDTTT. A helical transmembrane segment spans residues 238–258; sequence FISSILIINMIMSVIYIVGTF. At 259-274 the chain is on the extracellular side; sequence TLRNFQFDAFINNQPA. A helical transmembrane segment spans residues 275–295; that stretch reads LATVKTIFYLHPLFSFLMPLI. Topologically, residues 296–342 are cytoplasmic; the sequence is SSYHLSKMRERRVKRREHLMAIKTKGREGSDAYNQLLHDQWTQHFLK.

The protein belongs to the nematode receptor-like protein srb family. As to expression, expressed throughout the nervous system, in pharyngeal muscle, hermaphrodite vulval muscles and in the male tail. Not expressed in male somatic gonads or sperm.

Its subcellular location is the cell membrane. The protein resides in the perikaryon. The protein localises to the cell projection. It is found in the dendrite. Functionally, G-protein coupled receptor. Plays a role in the navigational capacity of sperm and promotes the targeting of sperm derived from males to the fertilization site in the uterus of hermaphrodites. This Caenorhabditis elegans protein is Serpentine receptor class beta-16.